The sequence spans 434 residues: Protein maelstrom homolog (434 aa).

A DNA-binding region (HMG box) is located at residues 4–73 (RRGSRNAYYF…AQGKDAGPWE (70 aa)). The segment at 357 to 387 (SHFSSSNQEQRSNTPTGDYPSGVKISGQSSS) is disordered. Polar residues predominate over residues 363 to 372 (NQEQRSNTPT).

It belongs to the maelstrom family. Interacts with SMARCB1, SIN3B and DDX4. Interacts with piRNA-associated proteins TDRD1, PIWIL1 and PIWIL2. Interacts with TEX19.

The protein resides in the cytoplasm. It is found in the nucleus. In terms of biological role, plays a central role during spermatogenesis by repressing transposable elements and preventing their mobilization, which is essential for the germline integrity. Acts via the piRNA metabolic process, which mediates the repression of transposable elements during meiosis by forming complexes composed of piRNAs and Piwi proteins and governs the methylation and subsequent repression of transposons. Its association with piP-bodies suggests a participation in the secondary piRNAs metabolic process. Required for the localization of germ-cell factors to the meiotic nuage. This chain is Protein maelstrom homolog (MAEL), found in Sus scrofa (Pig).